Here is a 251-residue protein sequence, read N- to C-terminus: Cell division protein ZapD (251 aa).

The protein belongs to the ZapD family. As to quaternary structure, interacts with FtsZ.

The protein resides in the cytoplasm. Cell division factor that enhances FtsZ-ring assembly. Directly interacts with FtsZ and promotes bundling of FtsZ protofilaments, with a reduction in FtsZ GTPase activity. The sequence is that of Cell division protein ZapD from Burkholderia cenocepacia (strain HI2424).